We begin with the raw amino-acid sequence, 295 residues long: Putative aquaporin-12A (295 aa).

A helical membrane pass occupies residues 1–21 (MAGLNVSLSFFFATFALCEAA). The Extracellular segment spans residues 22–54 (RRASKALLPVGAYEVFAREAMRTLVELGPWAGD). A helical transmembrane segment spans residues 55–75 (FGPDLLLTLLFLLFLAHGVTL). The Cytoplasmic portion of the chain corresponds to 76 to 99 (DGASANPTVSLQEFLMAEQSLPGT). Residues 77-114 (GASANPTVSLQEFLMAEQSLPGTLLKLAAQGLGMQAAC) constitute an intramembrane region (discontinuously helical). Positions 81-83 (NPT) match the NPA 1 motif. The helical transmembrane segment at 100 to 126 (LLKLAAQGLGMQAACTLMRLCWAWELS) threads the bilayer. The Extracellular portion of the chain corresponds to 127–145 (DLHLLQSLMAQSCSSALRT). Residues 146 to 166 (SVPHGALVEAACAFCFHLTLL) form a helical membrane-spanning segment. At 167 to 178 (HLRHSPPAYSGP) the chain is on the cytoplasmic side. A helical transmembrane segment spans residues 179–199 (AVALLVTVTAYTAGPFTSAFF). Residues 195 to 206 (TSAFFNPALAAS) constitute an intramembrane region (discontinuously helical). Residues 200–202 (NPA) carry the NPA 2 motif. Residues 200–215 (NPALAASVTFACSGHT) lie on the Extracellular side of the membrane. The chain crosses the membrane as a helical span at residues 216 to 236 (LLEYVQVYWLGPLTGMVLAVL). Residues 237–295 (LHQGRLPHLFQRNLFYGQKNKYRAPRGKPAPASGDTQTPAKGSSVREPGRSGVEGPHSS) are Cytoplasmic-facing. Residues 257-295 (KYRAPRGKPAPASGDTQTPAKGSSVREPGRSGVEGPHSS) form a disordered region.

It belongs to the MIP/aquaporin (TC 1.A.8) family. AQP11/AQP12 subfamily. In terms of assembly, homotetramer; each monomer provides an independent water pore. Restricted to the pancreas.

The protein resides in the membrane. The catalysed reaction is H2O(in) = H2O(out). Its function is as follows. Putative aquaporin. Could form homotetrameric transmembrane channels, with each monomer independently mediating water transport across the plasma membrane along its osmotic gradient. The sequence is that of Putative aquaporin-12A from Homo sapiens (Human).